The following is a 425-amino-acid chain: UPF0229 protein YE2273 (425 aa).

The segment at 84–110 (TNDRIERPQGGGGGSGSGQGNAGQDGE) is disordered. Residues 92–108 (QGGGGGSGSGQGNAGQD) are compositionally biased toward gly residues.

Belongs to the UPF0229 family.

This is UPF0229 protein YE2273 from Yersinia enterocolitica serotype O:8 / biotype 1B (strain NCTC 13174 / 8081).